The primary structure comprises 523 residues: GMP synthase [glutamine-hydrolyzing] (523 aa).

In terms of domain architecture, Glutamine amidotransferase type-1 spans 8–205 (KILILDFGSQ…VVGICGCECK (198 aa)). Cys85 serves as the catalytic Nucleophile. Active-site residues include His179 and Glu181. A GMPS ATP-PPase domain is found at 206–398 (WTAENIIEDA…LGLPAEMLNR (193 aa)). Position 233–239 (233–239 (SGGVDSS)) interacts with ATP.

In terms of assembly, homodimer.

The catalysed reaction is XMP + L-glutamine + ATP + H2O = GMP + L-glutamate + AMP + diphosphate + 2 H(+). It participates in purine metabolism; GMP biosynthesis; GMP from XMP (L-Gln route): step 1/1. Functionally, catalyzes the synthesis of GMP from XMP. In Actinobacillus pleuropneumoniae serotype 3 (strain JL03), this protein is GMP synthase [glutamine-hydrolyzing].